Consider the following 550-residue polypeptide: MVRGWEPPPGLDCAISEGHKSEGTMPPNKEASGLSSSPAGLICLPPISEELQLVWTQAAQTSELDSNEHLLKTFSYFPYPSLADIALLCLRYGLQMEKVKTWFMAQRLRCGISWSSEEIEETRARVVYRRDQLHFKSLLSFTHHAGRPPEEVPPPPVPAPEQVGIGIGPPTLSKPTQTKGLKVEPEEPSQMPPLPQSHQKLKESLMTPGSGAFPYQSDFWQHLQSSGLSKEQAGRGPNQSHGIGTASWNHSTTVPQPQARDKPPPIALIASSCKEESASSVTPSSSSTSSSFQVLANGATAASKPLQPLGCVPQSVSPSEQALPPHLEPAWPQGLRHNSVPGRVGPTEYLSPDMQRQRKTKRKTKEQLAILKSFFLQCQWARREDYQKLEQITGLPRPEIIQWFGDTRYALKHGQLKWFRDNAVPGAPSFQDPAIPTPPPSTRSLNERAETPPLPIPPPPPDIQPLERYWAAHQQLRETDIPQLSQASRLSTQQVLDWFDSRLPQPAEVVVCLDEEEEEEEEELPEDDEEEEEEEEEDDDDDDDDVIIQD.

The span at 1 to 10 (MVRGWEPPPG) shows a compositional bias: pro residues. The interval 1–36 (MVRGWEPPPGLDCAISEGHKSEGTMPPNKEASGLSS) is disordered. The segment at residues 55 to 114 (WTQAAQTSELDSNEHLLKTFSYFPYPSLADIALLCLRYGLQMEKVKTWFMAQRLRCGISW) is a DNA-binding region (homeobox 1). Residues 168–199 (GPPTLSKPTQTKGLKVEPEEPSQMPPLPQSHQ) are disordered. Residues Lys182, Lys200, and Lys202 each participate in a glycyl lysine isopeptide (Lys-Gly) (interchain with G-Cter in SUMO2) cross-link. A disordered region spans residues 223-265 (LQSSGLSKEQAGRGPNQSHGIGTASWNHSTTVPQPQARDKPPP). Residues 237-256 (PNQSHGIGTASWNHSTTVPQ) show a composition bias toward polar residues. Ser351 bears the Phosphoserine mark. 2 DNA-binding regions (homeobox) span residues 355-415 (QRQR…KHGQ) and 451-510 (TPPL…AEVV). The Nuclear localization signal motif lies at 358–363 (RKTKRK). 2 disordered regions span residues 424-465 (VPGA…DIQP) and 512-550 (CLDEEEEEEEEELPEDDEEEEEEEEEDDDDDDDDVIIQD). Residue Thr451 is modified to Phosphothreonine. Residues 452-463 (PPLPIPPPPPDI) are compositionally biased toward pro residues. Residues 513-550 (LDEEEEEEEEELPEDDEEEEEEEEEDDDDDDDDVIIQD) are compositionally biased toward acidic residues.

In terms of assembly, homodimer or heterodimer (Potential). Interacts with HOXC8. As to expression, ubiquitous. Strongly expressed in adult testis and kidney as well as fetal lung and kidney.

It is found in the nucleus. Functionally, may function as a transcriptional regulator. The chain is Homeobox and leucine zipper protein Homez (HOMEZ) from Homo sapiens (Human).